Here is a 199-residue protein sequence, read N- to C-terminus: VAMP-like protein YKT62 (199 aa).

Residues 7-131 (LVLKCDPETR…PYLKEASDKF (125 aa)) enclose the Longin domain. One can recognise a v-SNARE coiled-coil homology domain in the interval 139 to 199 (KLLKIQRELD…KKTNSCCTLL (61 aa)). Residue Cys195 is the site of S-palmitoyl cysteine attachment. Cys196 carries the post-translational modification Cysteine methyl ester. A lipid anchor (S-geranylgeranyl cysteine) is attached at Cys196. The propeptide at 197 to 199 (TLL) is removed in mature form.

This sequence belongs to the synaptobrevin family. Interacts with SYP41. Core constituent of the SNARE complex required for membrane fusion at the trans-Golgi network.

Its subcellular location is the cell membrane. In terms of biological role, involved in the secretory pathway. Essential for membrane fusion mediated by either SYP41 or SYP61; triggers the fusion of phospholipid vesicles containing SYP41 or SYP61 and VTI12. The chain is VAMP-like protein YKT62 from Arabidopsis thaliana (Mouse-ear cress).